Here is a 141-residue protein sequence, read N- to C-terminus: Protein MGF 100-2L (141 aa).

The protein belongs to the asfivirus MGF 100 family.

Functionally, plays a role in virus cell tropism, and may be required for efficient virus replication in macrophages. The chain is Protein MGF 100-2L from African swine fever virus (strain Badajoz 1971 Vero-adapted) (Ba71V).